A 325-amino-acid chain; its full sequence is 5-dehydro-2-deoxygluconokinase (325 aa).

It belongs to the carbohydrate kinase PfkB family.

The catalysed reaction is 5-dehydro-2-deoxy-D-gluconate + ATP = 6-phospho-5-dehydro-2-deoxy-D-gluconate + ADP + H(+). Its pathway is polyol metabolism; myo-inositol degradation into acetyl-CoA; acetyl-CoA from myo-inositol: step 5/7. Catalyzes the phosphorylation of 5-dehydro-2-deoxy-D-gluconate (2-deoxy-5-keto-D-gluconate or DKG) to 6-phospho-5-dehydro-2-deoxy-D-gluconate (DKGP). The chain is 5-dehydro-2-deoxygluconokinase (iolC) from Bacillus subtilis (strain 168).